Here is a 299-residue protein sequence, read N- to C-terminus: Homoserine kinase (299 aa).

85–95 (PMSRGLGSSAT) provides a ligand contact to ATP.

Belongs to the GHMP kinase family. Homoserine kinase subfamily.

The protein localises to the cytoplasm. It catalyses the reaction L-homoserine + ATP = O-phospho-L-homoserine + ADP + H(+). The protein operates within amino-acid biosynthesis; L-threonine biosynthesis; L-threonine from L-aspartate: step 4/5. Catalyzes the ATP-dependent phosphorylation of L-homoserine to L-homoserine phosphate. The sequence is that of Homoserine kinase from Clostridium novyi (strain NT).